A 626-amino-acid polypeptide reads, in one-letter code: (+)-3-carene synthase 1, chloroplastic (626 aa).

Residues 1–45 (MSLISAVPLASSCVSKSLISSVREHKALRRAIATLQMSRPGKSVA) constitute a chloroplast transit peptide. Residues D377, D381, and D529 each contribute to the Mg(2+) site. The short motif at 377–381 (DDMYD) is the DDXXD motif element.

This sequence belongs to the terpene synthase family. Tpsd subfamily. Requires Mg(2+) as cofactor. It depends on Mn(2+) as a cofactor.

The protein localises to the plastid. It is found in the chloroplast. The enzyme catalyses (2E)-geranyl diphosphate = (+)-car-3-ene + diphosphate. It catalyses the reaction (2E)-geranyl diphosphate = terpinolene + diphosphate. It participates in terpene metabolism; oleoresin biosynthesis. The protein operates within secondary metabolite biosynthesis; terpenoid biosynthesis. Its function is as follows. Monoterpene synthase (TPS) involved in the biosynthesis of monoterpene natural products included in conifer oleoresin secretions and volatile emissions; these compounds contribute to biotic and abiotic stress defense against herbivores and pathogens. Catalyzes the conversion of (2E)-geranyl diphosphate (GPP) to (+)-3-carene and, to a lower extent, to terpinolene. This is (+)-3-carene synthase 1, chloroplastic from Pinus banksiana (Jack pine).